The following is a 191-amino-acid chain: MQESTMTERQALETAVLGGGCFWCTEAVFQQVQGVHSVVSGYAGGHLERPTYRAVCGGDTGHAEVVRVEFDPAVIPYREILDIFFATHDPTTLERQGNDIGPQYRSAVFAQSPEQFAEAGATIRALSAANVFDAPIVTEVVDASGGKVPFWQAEDEHQNYFRDHPAQGYCAFVISPKVAKFRERFAHRLQA.

Cys21 is an active-site residue.

This sequence belongs to the MsrA Met sulfoxide reductase family.

It catalyses the reaction L-methionyl-[protein] + [thioredoxin]-disulfide + H2O = L-methionyl-(S)-S-oxide-[protein] + [thioredoxin]-dithiol. The enzyme catalyses [thioredoxin]-disulfide + L-methionine + H2O = L-methionine (S)-S-oxide + [thioredoxin]-dithiol. Its function is as follows. Has an important function as a repair enzyme for proteins that have been inactivated by oxidation. Catalyzes the reversible oxidation-reduction of methionine sulfoxide in proteins to methionine. This chain is Peptide methionine sulfoxide reductase MsrA, found in Ralstonia nicotianae (strain ATCC BAA-1114 / GMI1000) (Ralstonia solanacearum).